Consider the following 310-residue polypeptide: Ribosomal RNA small subunit methyltransferase H (310 aa).

S-adenosyl-L-methionine contacts are provided by residues 35 to 37, Asp-52, Phe-79, Asp-100, and Gln-107; that span reads GGH.

This sequence belongs to the methyltransferase superfamily. RsmH family.

Its subcellular location is the cytoplasm. The enzyme catalyses cytidine(1402) in 16S rRNA + S-adenosyl-L-methionine = N(4)-methylcytidine(1402) in 16S rRNA + S-adenosyl-L-homocysteine + H(+). Functionally, specifically methylates the N4 position of cytidine in position 1402 (C1402) of 16S rRNA. The protein is Ribosomal RNA small subunit methyltransferase H of Anaeromyxobacter sp. (strain K).